The following is a 184-amino-acid chain: MDTQKIEAAVKMIIEAVGENANREGLQETPARVARMYQEIFSGLGQTAEEHLSKSFEIIDDNMVVEKDIFFHTMCEHHFLPFYGRAHIAYIPDGRVAGLSKLARTVEVYSKKPQIQERLNIEVADALMDYLGAKGAFVVIEAEHMCMSMRGVRKPGTATLTTVARGLFETDKDLRDQAYRLMGL.

Positions 75, 78, and 146 each coordinate Zn(2+).

The protein belongs to the GTP cyclohydrolase I family. In terms of assembly, homomer.

It carries out the reaction GTP + H2O = 7,8-dihydroneopterin 3'-triphosphate + formate + H(+). Its pathway is cofactor biosynthesis; 7,8-dihydroneopterin triphosphate biosynthesis; 7,8-dihydroneopterin triphosphate from GTP: step 1/1. The chain is GTP cyclohydrolase 1 from Streptococcus pneumoniae (strain Hungary19A-6).